Consider the following 469-residue polypeptide: Dihydrolipoyl dehydrogenase (469 aa).

Residues 40 to 48 (EKAVLGGVC), lysine 57, and alanine 120 contribute to the FAD site. Cysteine 48 and cysteine 53 form a disulfide bridge. NAD(+)-binding positions include 186–190 (GGGAI), glutamate 209, and 275–278 (AVGV). Aspartate 317 and alanine 325 together coordinate FAD. Histidine 450 serves as the catalytic Proton acceptor.

This sequence belongs to the class-I pyridine nucleotide-disulfide oxidoreductase family. Homodimer. It depends on FAD as a cofactor.

It is found in the cytoplasm. It carries out the reaction N(6)-[(R)-dihydrolipoyl]-L-lysyl-[protein] + NAD(+) = N(6)-[(R)-lipoyl]-L-lysyl-[protein] + NADH + H(+). Lipoamide dehydrogenase is a component of the alpha-ketoacid dehydrogenase complexes. This Chlorobaculum tepidum (strain ATCC 49652 / DSM 12025 / NBRC 103806 / TLS) (Chlorobium tepidum) protein is Dihydrolipoyl dehydrogenase (lpd).